The sequence spans 100 residues: Cysteine-rich venom protein VAR1 (100 aa).

Positions 1 to 22 (MILLKLYLTLAAILCQSRGTTS) are cleaved as a signal peptide. The region spanning 41–81 (NKHNDLRRTVDPPAKNMLKMSWDNIIAESAKRAALRCNQNE) is the SCP domain.

This sequence belongs to the CRISP family. In terms of processing, contains 8 disulfide bonds. Expressed by the venom gland.

It localises to the secreted. Functionally, blocks ryanodine receptors, and potassium channels. The sequence is that of Cysteine-rich venom protein VAR1 from Varanus acanthurus (Ridge-tailed monitor).